Here is a 617-residue protein sequence, read N- to C-terminus: Guanylate cyclase soluble subunit beta-2 (617 aa).

Position 26 (histidine 26) interacts with heme. Residues 391-519 enclose the Guanylate cyclase domain; the sequence is TILFSDVVTF…DTVNTASRME (129 aa). Over residues 577–586 the composition is skewed to basic and acidic residues; that stretch reads RSKTPVDHKG. Residues 577-605 form a disordered region; the sequence is RSKTPVDHKGSTQKASLPTTKLQGSVQPS. Polar residues predominate over residues 588 to 604; the sequence is TQKASLPTTKLQGSVQP.

Belongs to the adenylyl cyclase class-4/guanylyl cyclase family. In terms of assembly, heterodimer of an alpha and a beta chain. Heme is required as a cofactor. As to expression, expressed in gastric signet ring cell carcinoma, but not in the normal stomach.

It localises to the cytoplasm. It carries out the reaction GTP = 3',5'-cyclic GMP + diphosphate. With respect to regulation, activated by nitric oxide in the presence of magnesium or manganese ions. In Homo sapiens (Human), this protein is Guanylate cyclase soluble subunit beta-2 (GUCY1B2).